Reading from the N-terminus, the 71-residue chain is Protein CYSTEINE-RICH TRANSMEMBRANE MODULE 8 (71 aa).

The span at 1–22 (MNQSAQNYFSVQKPSETSSGPY) shows a compositional bias: polar residues. The segment at 1-35 (MNQSAQNYFSVQKPSETSSGPYTSPPPIGYPTRDA) is disordered. Residues 48-64 (NSKGVNPEGCCAAICCC) form a helical membrane-spanning segment.

It belongs to the CYSTM1 family. Mostly expressed in stems, siliques, roots and flowers and, to a lower extent, in leaves.

The protein localises to the membrane. It is found in the nucleus. In terms of biological role, involved in resistance to abiotic stress. The sequence is that of Protein CYSTEINE-RICH TRANSMEMBRANE MODULE 8 from Arabidopsis thaliana (Mouse-ear cress).